Here is a 550-residue protein sequence, read N- to C-terminus: Arginine--tRNA ligase (550 aa).

Residues 130 to 140 (ANPTGPIHIGG) carry the 'HIGH' region motif.

Belongs to the class-I aminoacyl-tRNA synthetase family. In terms of assembly, monomer.

Its subcellular location is the cytoplasm. It catalyses the reaction tRNA(Arg) + L-arginine + ATP = L-arginyl-tRNA(Arg) + AMP + diphosphate. This Mycobacterium leprae (strain TN) protein is Arginine--tRNA ligase (argS).